A 151-amino-acid chain; its full sequence is uncharacterized protein (151 aa).

This is an uncharacterized protein from Methanocaldococcus jannaschii (strain ATCC 43067 / DSM 2661 / JAL-1 / JCM 10045 / NBRC 100440) (Methanococcus jannaschii).